The sequence spans 135 residues: Fatty acid-binding protein homolog 6 (135 aa).

A fatty acid contacts are provided by residues arginine 110 and 130–132 (REY).

It belongs to the calycin superfamily. Fatty-acid binding protein (FABP) family.

The chain is Fatty acid-binding protein homolog 6 (lbp-6) from Caenorhabditis elegans.